Consider the following 262-residue polypeptide: tRNA pseudouridine synthase A (262 aa).

Asp54 (nucleophile) is an active-site residue. Tyr113 provides a ligand contact to substrate.

The protein belongs to the tRNA pseudouridine synthase TruA family. In terms of assembly, homodimer.

It carries out the reaction uridine(38/39/40) in tRNA = pseudouridine(38/39/40) in tRNA. In terms of biological role, formation of pseudouridine at positions 38, 39 and 40 in the anticodon stem and loop of transfer RNAs. The chain is tRNA pseudouridine synthase A from Lactobacillus acidophilus (strain ATCC 700396 / NCK56 / N2 / NCFM).